A 298-amino-acid chain; its full sequence is uncharacterized protein (298 aa).

Transmembrane regions (helical) follow at residues 10-30 (VIYT…WKLL), 36-56 (LDIL…VLFF), 76-96 (ILSL…YIWA), 101-121 (FLLE…LLGI), 142-162 (GVII…LLAF), 179-199 (AIGL…YLLF), 212-232 (GTWL…LLFA), 243-263 (VGIL…FVYH), and 271-291 (AFTF…QVKW). EamA domains follow at residues 17-148 (FIMW…ISAF) and 162-286 (FSFG…LFTF).

The protein belongs to the EamA transporter family.

It is found in the cell membrane. This is an uncharacterized protein from Bacillus subtilis (strain 168).